Here is a 768-residue protein sequence, read N- to C-terminus: DNA topoisomerase 4 subunit A (768 aa).

Positions 38-521 (LPEVSDGQKP…AGRAVLTQTA (484 aa)) constitute a Topo IIA-type catalytic domain. The O-(5'-phospho-DNA)-tyrosine intermediate role is filled by Y126.

Belongs to the type II topoisomerase GyrA/ParC subunit family. ParC type 1 subfamily. In terms of assembly, heterotetramer composed of ParC and ParE.

Its subcellular location is the cell membrane. It catalyses the reaction ATP-dependent breakage, passage and rejoining of double-stranded DNA.. Its function is as follows. Topoisomerase IV is essential for chromosome segregation. It relaxes supercoiled DNA. Performs the decatenation events required during the replication of a circular DNA molecule. This Neisseria gonorrhoeae protein is DNA topoisomerase 4 subunit A.